We begin with the raw amino-acid sequence, 1135 residues long: MDVDGRWRNLPSGPSLKHLTDPSYGIPPEQQKAALQDLTRAHVDSFNYAALEGLSHAVQAIPPFEFAFKDERISLTIVDAVISPPSVPKGTICKDLNVYPAECRGRKSTYRGRLTADISWAVNGVPKGIIKQFLGYVPIMVKSKLCNLYNLPPRVLIEHHEEAEEMGGYFIINGIEKVIRMLIVPRRNFPIAMVRPKWKSRGLGYTQFGVSMRCVREEHSAVNMNLHYVENGTVMLNFIYRKELFFLPLGFALKALVSFSDYQIFQELIKGKEEDSFFRNSVSQMLRIVIEEGCHSQKQVLNYLGECFRVKLSLPDWYPNVEAAEFLLNQCICIHLQSNTDKFYLLCLMTRKLFALARGECMDDNPDSLVNQEVLSPGQLFLMFLKEKMENWLVSIKIVLDKRAQKANVSINNENLMKIFSMGTELTRPFEYLLATGNLRSKTGLGFLQDSGLCVVADKLNFLRYLSHFRCVHRGAAFAKMRTTTVRRLLPESWGFLCPVHTPDGAPCGLLNHLTAVCEVVTKFVYTASIPALLCGLGVTPVDTAPCRPYSDCYPVLLDGVMVGWVDKDLAPEVADTLRRFKVLREKRIPPWMEVALIPMTGKPSLYPGLFLFTTPCRLVRPVQNLELGREELIGTMEQLFMNVAIFEDEVFGGISTHQELFPHSLLSVIANFIPFSDHNQSPRNMYQCQMGKQTMGFPLLTYQNRSDNKLYRLQTPQSPLVRPCMYDFYDMDNYPIGTNAIVAVISYTGYDMEDAMIVNKASWERGFAHGSVYKSEFIDLSEKFKQGEDNLVFGVKPGDPRVMQKLDDDGLPFIGAKLEYGDPYYSYLNLNTGEGFVVYYKSKENCVVDNIKVCSNDMGSGKFKCICITVRIPRNPTIGDKFASRHGQKGILSRLWPAEDMPFTESGMMPDILFNPHGFPSRMTIGMLIESMAGKSAALHGLCHDATPFIFSEENSALEYFGEMLKAAGYNFYGTERLYSGISGMELEADIFIGVVYYQRLRHMVSDKFQVRTTGARDKVTNQPLGGRNVQGGIRFGEMERDALLAHGTSFLLHDRLFNCSDRSVAHMCVECGSLLSPLLEKPPPSWSAMRNRKYNCTVCGRSDTIDTVSVPYVFRYFVAELAAMNIKVKLDVI.

The interval 1–26 (MDVDGRWRNLPSGPSLKHLTDPSYGI) is disordered. R180 contacts RNA. The segment at 194–208 (VRPKWKSRGLGYTQF) is loop B. Residues 236 to 247 (LNFIYRKELFFL) are loop A. D367 contacts RNA. 2 fork loop regions span residues 439–453 (LRSKTGLGFLQDSGL) and 474–489 (RGAAFAKMRTTTVRRL). D755 is a Mg(2+) binding site. K890 contacts RNA. 2 residues coordinate DNA: K1020 and R1036. S1051 carries the phosphoserine modification. C1070, C1073, C1098, and C1101 together coordinate Zn(2+). The C4-type zinc-finger motif lies at 1070–1101 (CVECGSLLSPLLEKPPPSWSAMRNRKYNCTVC).

The protein belongs to the RNA polymerase beta chain family. As to quaternary structure, component of the RNA polymerase I (Pol I) complex consisting of 13 subunits: a ten-subunit catalytic core composed of POLR1A/RPA1, POLR1B/RPA2, POLR1C/RPAC1, POLR1D/RPAC2, POLR1H/RPA12, POLR2E/RPABC1, POLR2F/RPABC2, POLR2H/RPABC3, POLR2K/RPABC4 and POLR2L/RPABC5; a mobile stalk subunit POLR1F/RPA43 protruding from the core and additional subunits homologous to general transcription factors POLR1E/RPA49 and POLR1G/RPA34. Part of Pol I pre-initiation complex (PIC), in which Pol I core assembles with RRN3 and promoter-bound UTBF and SL1/TIF-IB complex. It depends on Mg(2+) as a cofactor.

It localises to the nucleus. It is found in the nucleolus. The protein resides in the chromosome. The catalysed reaction is RNA(n) + a ribonucleoside 5'-triphosphate = RNA(n+1) + diphosphate. In terms of biological role, catalytic core component of RNA polymerase I (Pol I), a DNA-dependent RNA polymerase which synthesizes ribosomal RNA precursors using the four ribonucleoside triphosphates as substrates. Transcribes 47S pre-rRNAs from multicopy rRNA gene clusters, giving rise to 5.8S, 18S and 28S ribosomal RNAs. Pol I-mediated transcription cycle proceeds through transcription initiation, transcription elongation and transcription termination stages. During transcription initiation, Pol I pre-initiation complex (PIC) is recruited by the selectivity factor 1 (SL1/TIF-IB) complex bound to the core promoter that precedes an rDNA repeat unit. The PIC assembly bends the promoter favoring the formation of the transcription bubble and promoter escape. Once the polymerase has escaped from the promoter it enters the elongation phase during which RNA is actively polymerized, based on complementarity with the template DNA strand. Highly processive, assembles in structures referred to as 'Miller trees' where many elongating Pol I complexes queue and transcribe the same rDNA coding regions. At terminator sequences downstream of the rDNA gene, PTRF interacts with Pol I and halts Pol I transcription leading to the release of the RNA transcript and polymerase from the DNA. Forms Pol I active center together with the largest subunit POLR1A/RPA1. Appends one nucleotide at a time to the 3' end of the nascent RNA, with POLR1A/RPA1 contributing a Mg(2+)-coordinating DxDGD motif, and POLR1B/RPA2 participating in the coordination of a second Mg(2+) ion and providing lysine residues believed to facilitate Watson-Crick base pairing between the incoming nucleotide and the template base. Typically, Mg(2+) ions direct a 5' nucleoside triphosphate to form a phosphodiester bond with the 3' hydroxyl of the preceding nucleotide of the nascent RNA, with the elimination of pyrophosphate. Has proofreading activity: Pauses and backtracks to allow the cleavage of a missincorporated nucleotide via POLR1H/RPA12. High Pol I processivity is associated with decreased transcription fidelity. In Mus musculus (Mouse), this protein is DNA-directed RNA polymerase I subunit RPA2.